The primary structure comprises 261 residues: MARQPLIAGNWKMNLNHLEAIALVQKIAFSLPEKYFAKVEVAVIPPFTDIRSVQTLIDGDKLLLKHGAQDVSEHESGAYTGEVSGPMLAKLGCSYVVVGHSERREHHAETDEVVNRKVRAVLKHGMSPILCVGEPLEVREAGGHVEHSTTQLINALKGLKTEQIRQVVVAYEPVWAIGTGKVATAADAQEVCAALRTALADKYGKEIADEVRVLYGGSVKSSNIGELIGQNDVDGALVGGASLNGDEFTKLSAMAAGGPLP.

10–12 (NWK) is a substrate binding site. The active-site Electrophile is the H100. E172 functions as the Proton acceptor in the catalytic mechanism. Substrate contacts are provided by residues G178, S218, and 239-240 (GG).

Belongs to the triosephosphate isomerase family. Homodimer.

Its subcellular location is the cytoplasm. It carries out the reaction D-glyceraldehyde 3-phosphate = dihydroxyacetone phosphate. Its pathway is carbohydrate biosynthesis; gluconeogenesis. It functions in the pathway carbohydrate degradation; glycolysis; D-glyceraldehyde 3-phosphate from glycerone phosphate: step 1/1. Involved in the gluconeogenesis. Catalyzes stereospecifically the conversion of dihydroxyacetone phosphate (DHAP) to D-glyceraldehyde-3-phosphate (G3P). In Saccharopolyspora erythraea (strain ATCC 11635 / DSM 40517 / JCM 4748 / NBRC 13426 / NCIMB 8594 / NRRL 2338), this protein is Triosephosphate isomerase.